We begin with the raw amino-acid sequence, 506 residues long: Chromodomain Y-like protein 2 (506 aa).

Residues 7–67 form the Chromo domain; the sequence is YEVERIVDKR…LHMSKDKRIK (61 aa). Residues 64-177 form a disordered region; it reads KRIKSGKQSS…RHFGNGSHQP (114 aa). Over residues 88-98 the composition is skewed to basic and acidic residues; it reads KLSHRPSDPGK. The segment covering 101–120 has biased composition (basic residues); the sequence is GTSHKRKRINPPLAKPKKGY. Polar residues predominate over residues 133–143; it reads KTVSYRTTPSG.

In terms of assembly, interacts (via chromo domain) with histone H3K9me3. In terms of tissue distribution, ubiquitously expressed.

The protein resides in the nucleus. This Homo sapiens (Human) protein is Chromodomain Y-like protein 2 (CDYL2).